We begin with the raw amino-acid sequence, 367 residues long: Adenine deaminase (367 aa).

H19, H21, and H209 together coordinate Zn(2+). The active-site Proton donor is the E212. Zn(2+) is bound at residue D290. D291 is a binding site for substrate.

Belongs to the metallo-dependent hydrolases superfamily. Adenosine and AMP deaminases family. Adenine deaminase type 2 subfamily. It depends on Zn(2+) as a cofactor.

It is found in the cytoplasm. Its subcellular location is the nucleus. The enzyme catalyses adenine + H2O + H(+) = hypoxanthine + NH4(+). In terms of biological role, catalyzes the hydrolytic deamination of adenine to hypoxanthine. Plays an important role in the purine salvage pathway and in nitrogen catabolism. Also exhibits a low activity towards N(6)-substituted adenines that are commonly known as the plant hormones cytokinins. The sequence is that of Adenine deaminase from Schizosaccharomyces pombe (strain 972 / ATCC 24843) (Fission yeast).